A 996-amino-acid chain; its full sequence is Disabled homolog 2-interacting protein (996 aa).

In terms of domain architecture, C2 spans 1 to 118; sequence MENLRRAVHP…AGRQFVEKWY (118 aa). In terms of domain architecture, Ras-GAP spans 194–402; that stretch reads GKVKDFLTDL…TNMQRFLLEI (209 aa). The interval 453–750 is necessary for interaction with AKT1; the sequence is LRDVHTALST…RTPPTMLSTL (298 aa). Polar residues predominate over residues 460-475; it reads LSTPGSGQLPGTNDLA. Disordered regions lie at residues 460-486 and 522-545; these read LSTPGSGQLPGTNDLASTPGSGSSSVS and RSSGVQPSPARSSSYSEANEPDLQ. Residues 476-486 show a composition bias toward low complexity; sequence STPGSGSSSVS. Residues 522-538 are compositionally biased toward polar residues; it reads RSSGVQPSPARSSSYSE. Ser-535 is subject to Phosphoserine; by MAP3K5 and RIPK1. Ser-554 carries the phosphoserine modification. Disordered stretches follow at residues 611 to 630, 650 to 672, 702 to 805, 822 to 841, and 971 to 996; these read VPTPTTPGTSEGAPGRPQLL, PRGLGDSGSEGHSSLSSHSNSEE, SLTE…SPNA, EDEGLGPDPPHRDRLRSKEE, and RNGVSPTNPTKLQITENGEFRNSSNC. Residues 659–672 show a composition bias toward low complexity; sequence EGHSSLSSHSNSEE. Residues 726-738 are compositionally biased toward pro residues; sequence QPPPPPPPPPPAP. 2 stretches are compositionally biased toward polar residues: residues 746–762 and 774–783; these read MLSTLQYPRPSSGTLAS and LRQQSSSSKG. 2 positions are modified to phosphoserine: Ser-785 and Ser-802. The span at 830–841 shows a compositional bias: basic and acidic residues; sequence PPHRDRLRSKEE. Residues 832 to 966 are a coiled coil; it reads HRDRLRSKEE…SALTQLKERY (135 aa). Over residues 974–996 the composition is skewed to polar residues; that stretch reads VSPTNPTKLQITENGEFRNSSNC.

On plasma membrane, exists in an inactive form complexed with TNFR1; in response to TNF-alpha, dissociates from TNFR1 complex, translocates to cytoplasm and forms part of an intracellular signaling complex comprising TRADD, RIPK1, TRAF2 and MAP3K5. Interacts (via NPXY motif) with DAB2 (via PID domain). Interacts (via PH domain) with ERN1. Part of a cytoplasmic complex made of HIPK1, DAB2IP and MAP3K5 in response to TNF-alpha; this complex formation promotes MAP3K5-JNK activation and subsequent apoptosis. Interacts (via N-terminal domain) with JAK2; the interaction occurs in a IFNG/IFN-gamma-dependent manner and inhibits JAK2 autophosphorylation activity. Interacts (via C2 domain) with GSK3B; the interaction stimulates GSK3B kinase activation. Interacts (via C2 domain) with PPP2CA. Interacts (via proline-rich motif) with a regulatory p85 subunit (via SH3 domain) of the PI3K complex; the interaction inhibits the PI3K-AKT complex activity in a TNF-alpha-dependent manner in prostate cancer (PCa) cells. Interacts with AKT1; the interaction is increased in a TNF-alpha-induced manner. Interacts (via C2 domain and active form preferentially) with KDR/VEGFR2 (tyrosine-phosphorylated active form preferentially); the interaction occurs at the late phase of VEGFA response and inhibits KDR/VEGFR2 activity. Interacts (via N-terminus C2 domain) with MAP3K5 ('Ser-966' dephosphorylated form preferentially); the interaction occurs in a TNF-alpha-induced manner. Interacts (via Ras-GAP domain) with the catalytic subunit of protein phosphatase PP2A; the interaction occurs in resting endothelial cells, is further enhanced by TNF-alpha stimulation and is required to bridge PP2A to MAP3K5. Interacts (via C-terminus PER domain) with TRAF2 (via zinc fingers); the interaction occurs in a TNF-alpha-dependent manner. Interacts with 14-3-3 proteins; the interaction occurs in a TNF-alpha-dependent manner. Interacts (via Ras-GAP domain) with RIPK1 (via kinase domain); the interaction occurs in a TNF-alpha-dependent manner. Interacts with DAB1 and DAB2. Interacts with RAB40C; acts as a GAP for RAB40C. In terms of processing, in response to TNF-alpha-induction, phosphorylated at Ser-535; phosphorylation leads to a conformational change, and thus, increases its association with 14-3-3 proteins, MAP3K5, RIPK1 and TRAF2 in endothelial cells; also stimulates regulatory p85 subunit sequestring and PI3K-p85 complex activity inhibition. In terms of tissue distribution, expressed in brain, lung, thymus, bladder and skeletal muscle. Up-regulatedd during prostate degeneration.

Its subcellular location is the cytoplasm. It is found in the cell membrane. It localises to the membrane. The protein localises to the cell projection. The protein resides in the dendrite. In terms of biological role, functions as a scaffold protein implicated in the regulation of a large spectrum of both general and specialized signaling pathways. Involved in several processes such as innate immune response, inflammation and cell growth inhibition, apoptosis, cell survival, angiogenesis, cell migration and maturation. Also plays a role in cell cycle checkpoint control; reduces G1 phase cyclin levels resulting in G0/G1 cell cycle arrest. Mediates signal transduction by receptor-mediated inflammatory signals, such as the tumor necrosis factor (TNF), interferon (IFN) or lipopolysaccharide (LPS). Modulates the balance between phosphatidylinositol 3-kinase (PI3K)-AKT-mediated cell survival and apoptosis stimulated kinase (MAP3K5)-JNK signaling pathways; sequesters both AKT1 and MAP3K5 and counterbalances the activity of each kinase by modulating their phosphorylation status in response to pro-inflammatory stimuli. Acts as a regulator of the endoplasmic reticulum (ER) unfolded protein response (UPR) pathway; specifically involved in transduction of the ER stress-response to the JNK cascade through ERN1. Mediates TNF-alpha-induced apoptosis activation by facilitating dissociation of inhibitor 14-3-3 from MAP3K5; recruits the PP2A phosphatase complex which dephosphorylates MAP3K5 on 'Ser-966', leading to the dissociation of 13-3-3 proteins and activation of the MAP3K5-JNK signaling pathway in endothelial cells. Acts a negative regulator in the IFN-gamma-mediated JAK-STAT signaling cascade by inhibiting smooth muscle cell (VSMCs) proliferation and intimal expansion, and thus, prevents graft arteriosclerosis (GA). Acts as a GTPase-activating protein (GAP) for the ADP ribosylation factor 6 (ARF6). Promotes hydrolysis of the ARF6-bound GTP and thus, negatively regulates phosphatidylinositol 4,5-bisphosphate (PIP2)-dependent TLR4-TIRAP-MyD88 and NF-kappa-B signaling pathways in endothelial cells in response to lipopolysaccharides (LPS). Binds specifically to phosphatidylinositol 4-phosphate (PtdIns4P) and phosphatidylinositol 3-phosphate (PtdIns3P). In response to vascular endothelial growth factor (VEGFA), acts as a negative regulator of the VEGFR2-PI3K-mediated angiogenic signaling pathway by inhibiting endothelial cell migration and tube formation. In the developing brain, promotes both the transition from the multipolar to the bipolar stage and the radial migration of cortical neurons from the ventricular zone toward the superficial layer of the neocortex in a glial-dependent locomotion process. Probable downstream effector of the Reelin signaling pathway; promotes Purkinje cell (PC) dendrites development and formation of cerebellar synapses. Also functions as a tumor suppressor protein in prostate cancer progression; prevents cell proliferation and epithelial-to-mesenchymal transition (EMT) through activation of the glycogen synthase kinase-3 beta (GSK3B)-induced beta-catenin and inhibition of PI3K-AKT and Ras-MAPK survival downstream signaling cascades, respectively. Mediates TNF/TRAF2-induced MAP3K5-JNK activation, while it inhibits CHUK-NF-kappa-B signaling. Functions as a Ras GTPase-activating protein. May act as a tumor suppressor gene. This is Disabled homolog 2-interacting protein (Dab2ip) from Rattus norvegicus (Rat).